The sequence spans 301 residues: Ribonuclease Z (301 aa).

Zn(2+) contacts are provided by H63, H65, D67, H68, H141, D204, and H262. D67 functions as the Proton acceptor in the catalytic mechanism.

The protein belongs to the RNase Z family. Homodimer. Zn(2+) is required as a cofactor.

The enzyme catalyses Endonucleolytic cleavage of RNA, removing extra 3' nucleotides from tRNA precursor, generating 3' termini of tRNAs. A 3'-hydroxy group is left at the tRNA terminus and a 5'-phosphoryl group is left at the trailer molecule.. Its function is as follows. Zinc phosphodiesterase, which displays some tRNA 3'-processing endonuclease activity. Probably involved in tRNA maturation, by removing a 3'-trailer from precursor tRNA. This Streptomyces coelicolor (strain ATCC BAA-471 / A3(2) / M145) protein is Ribonuclease Z.